Consider the following 160-residue polypeptide: SsrA-binding protein (160 aa).

The protein belongs to the SmpB family.

It is found in the cytoplasm. Functionally, required for rescue of stalled ribosomes mediated by trans-translation. Binds to transfer-messenger RNA (tmRNA), required for stable association of tmRNA with ribosomes. tmRNA and SmpB together mimic tRNA shape, replacing the anticodon stem-loop with SmpB. tmRNA is encoded by the ssrA gene; the 2 termini fold to resemble tRNA(Ala) and it encodes a 'tag peptide', a short internal open reading frame. During trans-translation Ala-aminoacylated tmRNA acts like a tRNA, entering the A-site of stalled ribosomes, displacing the stalled mRNA. The ribosome then switches to translate the ORF on the tmRNA; the nascent peptide is terminated with the 'tag peptide' encoded by the tmRNA and targeted for degradation. The ribosome is freed to recommence translation, which seems to be the essential function of trans-translation. The protein is SsrA-binding protein of Proteus mirabilis (strain HI4320).